The primary structure comprises 286 residues: NADPH-dependent 7-cyano-7-deazaguanine reductase (286 aa).

92-94 is a binding site for substrate; sequence IES. Residue 94–95 coordinates NADPH; sequence SK. The active-site Thioimide intermediate is the Cys194. Asp201 acts as the Proton donor in catalysis. Residue 233-234 coordinates substrate; it reads HE. Residue 262 to 263 coordinates NADPH; sequence RG.

The protein belongs to the GTP cyclohydrolase I family. QueF type 2 subfamily. Homodimer.

Its subcellular location is the cytoplasm. It catalyses the reaction 7-aminomethyl-7-carbaguanine + 2 NADP(+) = 7-cyano-7-deazaguanine + 2 NADPH + 3 H(+). It participates in tRNA modification; tRNA-queuosine biosynthesis. Catalyzes the NADPH-dependent reduction of 7-cyano-7-deazaguanine (preQ0) to 7-aminomethyl-7-deazaguanine (preQ1). This Shewanella oneidensis (strain ATCC 700550 / JCM 31522 / CIP 106686 / LMG 19005 / NCIMB 14063 / MR-1) protein is NADPH-dependent 7-cyano-7-deazaguanine reductase.